Here is a 296-residue protein sequence, read N- to C-terminus: 4-hydroxy-tetrahydrodipicolinate synthase (296 aa).

A pyruvate-binding site is contributed by T47. The active-site Proton donor/acceptor is the Y135. Residue K164 is the Schiff-base intermediate with substrate of the active site. Residue I207 coordinates pyruvate.

It belongs to the DapA family. As to quaternary structure, homotetramer; dimer of dimers.

The protein resides in the cytoplasm. It carries out the reaction L-aspartate 4-semialdehyde + pyruvate = (2S,4S)-4-hydroxy-2,3,4,5-tetrahydrodipicolinate + H2O + H(+). It functions in the pathway amino-acid biosynthesis; L-lysine biosynthesis via DAP pathway; (S)-tetrahydrodipicolinate from L-aspartate: step 3/4. In terms of biological role, catalyzes the condensation of (S)-aspartate-beta-semialdehyde [(S)-ASA] and pyruvate to 4-hydroxy-tetrahydrodipicolinate (HTPA). The chain is 4-hydroxy-tetrahydrodipicolinate synthase from Karelsulcia muelleri (strain GWSS) (Sulcia muelleri).